Reading from the N-terminus, the 1856-residue chain is MALVGVDFQAPLRIVSRVQFGILGPEEIKRMSVAHVEFPEVYENGKPKLGGLMDPRQGVIDRRGRCMTCAGNLTDCPGHFGHLELAKPVFHIGFLTKTLKILRCVCFYCGRLLIDKSAPRVLEILKKTGTNSKKRLTMIYDLCKAKSVCEGAAEKEEGMPDDPDDPMNDGKKVAGGCGRYQPSYRRVGIDINAEWKKNVNEDTQERKIMLTAERVLEVFQQITDEDILVIGMDPQFARPEWMICTVLPVPPLAVRPAVVTFGSAKNQDDLTHKLSDIIKTNQQLQRNEANGAAAHVLTDDVRLLQFHVATLVDNCIPGLPTATQKGGRPLKSIKQRLKGKEGRIRGNLMGKRVDFSARTVITADPNLPIDTVGVPRTIAQNLTFPEIVTPFNVDKLQELVNRGDTQYPGAKYIIRENGARVDLRYHPRAADLHLQPGYRVERHMKDGDIIVFNRQPTLHKMSMMGHRVKILPWSTFRMNLSVTSPYNADFDGDEMNLHLPQSLETRAEIEEIAMVPRQLITPQANKPVMGIVQDTLCAVRMMTKRDVFIDWPFMMDLLMYLPTWDGKVPQPAILKPKPLWTGKQVFSLIIPGNVNVLRTHSTHPDSEDSGPYKWISPGDTKVIIEHGELLSGIVCSKTVGKSAGNLLHVVTLELGYEIAANFYSHIQTVINAWLIREGHTIGIGDTIADQATYLDIQNTIRKAKQDVVDVIEKAHNDDLEPTPGNTLRQTFENKVNQILNDARDRTGSSAQKSLSEFNNFKSMVVSGSKGSKINISQVIACVGQQNVEGKRIPFGFRHRTLPHFIKDDYGPESKGFVENSYLAGLTPSEFFFHAMGGREGLIDTAVKTAETGYIQRRLIKAMESVMVNYDGTVRNSLAQMVQLRYGEDGLDGMWVENQNMPTMKPNNAVFERDFRMDLTDNKFLRKNYSEDVVREIQESEDGISLVESEWSQLEEDRRLLRKIFPRGDAKIVLPCNLQRLIWNAQKIFKVDLRKPVNLSPLHVISGVRELSKKLIIVSGNDEISKQAQYNATLLMNILLRSTLCTKNMCTKSKLNSEAFDWLLGEIESRFQQAIAQPGEMVGALAAQSLGEPATQMTLNTFHYAGVSAKNVTLGVPRLKEIINVSKTLKTPSLTVFLTGAAAKDPEKAKDVLCKLEHTTLKKVTCNTAIYYDPDPKNTVIAEDEEWVSIFYEMPDHDLSRTSPWLLRIELDRKRMVDKKLTMEMIADRIHGGFGNDVHTIYTDDNAEKLVFRLRIAGEDKGEAQEEQVDKMEDDVFLRCIEANMLSDLTLQGIPAISKVYMNQPNTDDKKRIIITPEGGFKSVADWILETDGTALLRVLSERQIDPVRTTSNDICEIFEVLGIEAVRKAIEREMDNVISFDGSYVNYRHLALLCDVMTAKGHLMAITRHGINRQEVGALMRCSFEETVDILMEAAVHAEEDPVKGVSENIMLGQLARCGTGCFDLVLDVEKCKYGMEIPQNVVMGGGFYGSFAGSPSNREFSPAHSPWNSGVTPTYAGAAWSPTTGGMSPGAGFSPAGNTDGGASPFNEGGWSPASPGDPLGALSPRTPSYGGMSPGVYSPSSPQFSMTSPHYSPTSPSYSPTSPAAGQSPVSPSYSPTSPSYSPTSPSYSPTSPSYSPTSPSYSPTSPSYSPTSPSYSPSSPSYSPSSPSYSPSSPRYSPTSPTYSPTSPTYSPTSPTYSPTSPTYSPTSPSYESGGGYSPSSPKYSPSSPTYSPTSPSYSPTSPQYSPTSPQYSPSSPTYTPSSPTYNPTSPRGFSSPQYSPTSPTYSPTSPSYTPSSPQYSPTSPTYTPSPSEQPGTSAQYSPTSPTYSPSSPTYSPASPSYSPSSPTYDPNS.

Zn(2+) is bound by residues Cys66, Cys69, Cys76, His79, Cys106, Cys109, Cys149, and Cys177. Residues 256–268 (PAVVTFGSAKNQD) form a lid loop region. A rudder loop region spans residues 314-331 (NCIPGLPTATQKGGRPLK). Positions 489, 491, and 493 each coordinate Mg(2+). The interval 827–839 (PSEFFFHAMGGRE) is bridging helix. A Glycyl lysine isopeptide (Lys-Gly) (interchain with G-Cter in ubiquitin) cross-link involves residue Lys1260. Residues 1523-1856 (PTTGGMSPGA…PSSPTYDPNS (334 aa)) are disordered. Residues 1587–1856 (SMTSPHYSPT…PSSPTYDPNS (270 aa)) show a composition bias toward low complexity. 27 tandem repeats follow at residues 1593-1599 (YSPTSPS), 1600-1606 (YSPTSPA), 1616-1622 (YSPTSPS), 1623-1629 (YSPTSPS), 1630-1636 (YSPTSPS), 1637-1643 (YSPTSPS), 1644-1650 (YSPTSPS), 1651-1657 (YSPTSPS), 1658-1664 (YSPSSPS), 1665-1671 (YSPSSPS), 1672-1678 (YSPSSPR), 1679-1685 (YSPTSPT), 1686-1692 (YSPTSPT), 1693-1699 (YSPTSPT), 1700-1706 (YSPTSPT), 1707-1713 (YSPTSPS), 1720-1726 (YSPSSPK), 1727-1733 (YSPSSPT), 1734-1740 (YSPTSPS), 1741-1747 (YSPTSPQ), 1748-1754 (YSPTSPQ), 1755-1761 (YSPSSPT), 1769-1775 (YNPTSPR), 1782-1788 (YSPTSPT), 1789-1795 (YSPTSPS), 1796-1802 (YTPSSPQ), and 1803-1809 (YSPTSPT). The segment at 1593 to 1816 (YSPTSPSYSP…SPTYTPSPSE (224 aa)) is C-terminal domain (CTD); 28 X 7 AA approximate tandem repeats of Y-[ST]-P-[ST]-S-P-[AGKNQRST]. Residues 1810–1816 (YTPSPSE) form a 28; approximate repeat.

The protein belongs to the RNA polymerase beta' chain family. In terms of assembly, component of the RNA polymerase II (Pol II) complex consisting of 12 subunits. Interacts with sig-7. In terms of processing, the tandem 7 residues repeats in the C-terminal domain (CTD) can be highly phosphorylated. The phosphorylation activates Pol II. Phosphorylation occurs mainly at residues 'Ser-2' and 'Ser-5' of the heptapeptide repeat and starts at the 3- to 4-cell embryonic stage. This phosphorylation also occurs in the early stages of oocyte development and is not detected in oocytes arrested at the meiotic diakinesis stage. In the somatic lineage, phosphorylation at 'Ser-2' is mediated by cdk-12 downstream of cdk-9 whereas in the germline lineage cdk-12 phosphorylates 'Ser-2' independently of cdk-9. Phosphorylation is likely mediated by cdk-7. May be dephosphorylated by fcp-1 in diakinetic oocytes and in 1-cell and 2-cell embryos. Dephosphorylated at 'Ser-5' of the heptapeptide repeats by ssup-72. The phosphorylation state is believed to result from the balanced action of site-specific CTD kinases and phosphatase, and a 'CTD code' that specifies the position of Pol II within the transcription cycle has been proposed. Following transcription stress, the elongating form of RNA polymerase II (RNA pol IIo) is polyubiquitinated via 'Lys-63'-linkages on Lys-1260 at DNA damage sites without leading to degradation: ubiquitination promotes RNA pol IIo backtracking to allow access by the transcription-coupled nucleotide excision repair (TC-NER) machinery. Subsequent DEF1-dependent polyubiquitination by the elongin complex via 'Lys-48'-linkages may lead to proteasome-mediated degradation; presumably at stalled RNA pol II where TC-NER has failed, to halt global transcription and enable 'last resort' DNA repair pathways.

The protein localises to the nucleus. It is found in the chromosome. It catalyses the reaction RNA(n) + a ribonucleoside 5'-triphosphate = RNA(n+1) + diphosphate. In terms of biological role, DNA-dependent RNA polymerase catalyzes the transcription of DNA into RNA using the four ribonucleoside triphosphates as substrates. Largest and catalytic component of RNA polymerase II which synthesizes mRNA precursors and many functional non-coding RNAs. Forms the polymerase active center together with the second largest subunit. Pol II is the central component of the basal RNA polymerase II transcription machinery. It is composed of mobile elements that move relative to each other. RPB1 is part of the core element with the central large cleft, the clamp element that moves to open and close the cleft and the jaws that are thought to grab the incoming DNA template. At the start of transcription, a single-stranded DNA template strand of the promoter is positioned within the central active site cleft of Pol II. A bridging helix emanates from RPB1 and crosses the cleft near the catalytic site and is thought to promote translocation of Pol II by acting as a ratchet that moves the RNA-DNA hybrid through the active site by switching from straight to bent conformations at each step of nucleotide addition. During transcription elongation, Pol II moves on the template as the transcript elongates. Elongation is influenced by the phosphorylation status of the C-terminal domain (CTD) of Pol II largest subunit (RPB1), which serves as a platform for assembly of factors that regulate transcription initiation, elongation, termination and mRNA processing. Involved in the transcription of several genes including those involved in embryogenesis. The sequence is that of DNA-directed RNA polymerase II subunit RPB1 from Caenorhabditis elegans.